An 84-amino-acid chain; its full sequence is MARENKKELIGKVVSDKMSKTVVVEIVQRKMHPIYHKYLKVSRRVKAHDEREESKLGDKVKIVESRPISKEKRWRLIEILERSK.

Belongs to the universal ribosomal protein uS17 family. In terms of assembly, part of the 30S ribosomal subunit.

In terms of biological role, one of the primary rRNA binding proteins, it binds specifically to the 5'-end of 16S ribosomal RNA. This is Small ribosomal subunit protein uS17 from Borrelia duttonii (strain Ly).